The sequence spans 461 residues: Argininosuccinate lyase (461 aa).

This sequence belongs to the lyase 1 family. Argininosuccinate lyase subfamily.

The protein localises to the cytoplasm. The enzyme catalyses 2-(N(omega)-L-arginino)succinate = fumarate + L-arginine. It functions in the pathway amino-acid biosynthesis; L-arginine biosynthesis; L-arginine from L-ornithine and carbamoyl phosphate: step 3/3. The chain is Argininosuccinate lyase from Clostridium beijerinckii (strain ATCC 51743 / NCIMB 8052) (Clostridium acetobutylicum).